The sequence spans 264 residues: uncharacterized protein (264 aa).

A run of 6 helical transmembrane segments spans residues 23-43 (LIFLAPFSLFTQIFMVITALI), 59-79 (FDTFTYQSNSLAIFLVWYYFL), 91-111 (LVLSVTGYLVFTVIFFNFYAL), 150-170 (FSELLLHVIHPLFYFIYVGLL), 190-210 (AGIYPSIYAFYLQTIPFLNVW), and 233-253 (WIWSIPIFASMFLILWMLFVI).

It localises to the cell membrane. This is an uncharacterized protein from Mycoplasma genitalium (strain ATCC 33530 / DSM 19775 / NCTC 10195 / G37) (Mycoplasmoides genitalium).